Reading from the N-terminus, the 208-residue chain is HTLV-1 basic zipper factor (208 aa).

The disordered stretch occupies residues 59–93 (RLRWGPVGEEAPPRGETHRDRQRRAEEKRKRKRER). Over residues 69–86 (APPRGETHRDRQRRAEEK) the composition is skewed to basic and acidic residues. 3 short sequence motifs (nuclear localization signal) span residues 86-91 (KRKRKR), 115-119 (RRRRA), and 136-140 (RRERK). Basic and acidic residues predominate over residues 125 to 143 (DRARRKLEEEERRERKWRQ). Residues 125–160 (DRARRKLEEEERRERKWRQTEQGAKQRSARKEKMTE) are disordered.

Belongs to the HTLV-1 HBZ protein family. As to quaternary structure, interacts with host ATF4; this interaction inhibits viral RNA transcriptional activation by preventing ATF4 binding to Tax-responsive elements. Interacts with host CREB1; this interaction inhibits host CREB1 transcriptional activity. Interacts with host JUN, JUNB and JUND. Interacts with host EP300.

It localises to the host nucleus. Contributes to the regulation of viral RNA transcription by interacting with host proteins involved in transcriptional activation such as ATF4, or CREB1, and by inhibiting their activity. Additionally, HBZ suppresses host NF-kappa-B-driven transcription mediated by host RELA as well as transcription of some classical NF-kappa-B target genes, including IL8, IL2RA, IRF4, VCAM1, and VEGFA. The sequence is that of HTLV-1 basic zipper factor (HBZ) from Human T-cell leukemia virus 1 (isolate Melanesia mel5 subtype C) (HTLV-1).